A 546-amino-acid polypeptide reads, in one-letter code: Protein FAM124A (546 aa).

Disordered regions lie at residues 1–37, 285–361, and 488–546; these read MDPK…SELS, KFPK…QRSK, and SSSS…EFYI. Residues 24-36 are compositionally biased toward low complexity; sequence SDYSHLSSTSSEL. The span at 285-302 shows a compositional bias: basic residues; that stretch reads KFPKPGRVHHSSEKKRHS. Polar residues-rich tracts occupy residues 304–324 and 347–361; these read PLPS…SPLN and ANST…QRSK. Over residues 488–511 the composition is skewed to low complexity; sequence SSSSATARAAPPAPSTSTLTDSSP.

This sequence belongs to the FAM124 family.

This is Protein FAM124A (FAM124A) from Pongo abelii (Sumatran orangutan).